Reading from the N-terminus, the 96-residue chain is UPF0235 protein YggU (96 aa).

Belongs to the UPF0235 family.

The protein is UPF0235 protein YggU of Escherichia coli O157:H7.